Consider the following 65-residue polypeptide: UPF0434 protein bsr0601 (65 aa).

It belongs to the UPF0434 family.

The polypeptide is UPF0434 protein bsr0601 (Bradyrhizobium diazoefficiens (strain JCM 10833 / BCRC 13528 / IAM 13628 / NBRC 14792 / USDA 110)).